Consider the following 498-residue polypeptide: Lipase 3 (498 aa).

A disulfide bridge connects residues cysteine 60 and cysteine 91. Asparagine 193 carries an N-linked (GlcNAc...) asparagine glycan. Serine 200 acts as the Acyl-ester intermediate in catalysis. A glycan (N-linked (GlcNAc...) asparagine) is linked at asparagine 384. The Charge relay system role is filled by histidine 409. Asparagine 418 carries N-linked (GlcNAc...) asparagine glycosylation.

Belongs to the type-B carboxylesterase/lipase family.

The enzyme catalyses a triacylglycerol + H2O = a diacylglycerol + a fatty acid + H(+). This is Lipase 3 (LIP3) from Yarrowia lipolytica (strain CLIB 122 / E 150) (Yeast).